We begin with the raw amino-acid sequence, 480 residues long: Heparin cofactor 2 (480 aa).

The first 19 residues, 1–19, serve as a signal peptide directing secretion; that stretch reads MQHRPHLLLISLTIMSVCG. N-linked (GlcNAc...) asparagine glycosylation is present at Asn-32. A run of 2 repeats spans residues 56-66 and 70-80. A 2 X 11 AA approximate repeats, Asp/Glu-rich (acidic) (hirudin-like) region spans residues 56 to 80; it reads GEEDDDYLDLEKLLSEDDDYIDIID. 2 positions are modified to sulfotyrosine: Tyr-62 and Tyr-75. Asn-169 is a glycosylation site (N-linked (GlcNAc...) asparagine). Positions 173–193 are glycosaminoglycan-binding site; that stretch reads KYEILTIHNLFRKLTHRLFRR. N-linked (GlcNAc...) asparagine glycans are attached at residues Asn-368 and Asn-404.

It belongs to the serpin family. In terms of processing, N-glycosylated; different glycan composition appears to lead to two forms of this protein (56 and 60 kDa).

Functionally, thrombin inhibitor activated by the glycosaminoglycans, heparin or dermatan sulfate. In the presence of the latter, HC-II becomes the predominant thrombin inhibitor in place of antithrombin III (AT). The sequence is that of Heparin cofactor 2 (SERPIND1) from Oryctolagus cuniculus (Rabbit).